The primary structure comprises 142 residues: MAKKVQAYVKLQVAAGMANPSPPVGPALGQQGVNIMEFCKAFNAKTDSIEKGLPIPVVITVYADRSFTFITKTPPAAVLLKKAAGIKSGSGKPNKDKVGKISRAQLQEIAQTKAADMTGADIEAMTRSIEGTARSMGLVVED.

The protein belongs to the universal ribosomal protein uL11 family. As to quaternary structure, part of the ribosomal stalk of the 50S ribosomal subunit. Interacts with L10 and the large rRNA to form the base of the stalk. L10 forms an elongated spine to which L12 dimers bind in a sequential fashion forming a multimeric L10(L12)X complex. One or more lysine residues are methylated.

Forms part of the ribosomal stalk which helps the ribosome interact with GTP-bound translation factors. This is Large ribosomal subunit protein uL11 from Citrobacter koseri (strain ATCC BAA-895 / CDC 4225-83 / SGSC4696).